Here is a 719-residue protein sequence, read N- to C-terminus: DNA ligase (719 aa).

NAD(+) contacts are provided by residues Asp42–Asp46, Ser92–Leu93, and Glu126. The active-site N6-AMP-lysine intermediate is the Lys128. Residues Arg149, Glu185, Lys301, and Lys325 each coordinate NAD(+). The Zn(2+) site is built by Cys430, Cys433, Cys448, and Cys454. Residues Ala640–Asp719 enclose the BRCT domain.

This sequence belongs to the NAD-dependent DNA ligase family. LigA subfamily. Mg(2+) is required as a cofactor. Requires Mn(2+) as cofactor.

The enzyme catalyses NAD(+) + (deoxyribonucleotide)n-3'-hydroxyl + 5'-phospho-(deoxyribonucleotide)m = (deoxyribonucleotide)n+m + AMP + beta-nicotinamide D-nucleotide.. Its function is as follows. DNA ligase that catalyzes the formation of phosphodiester linkages between 5'-phosphoryl and 3'-hydroxyl groups in double-stranded DNA using NAD as a coenzyme and as the energy source for the reaction. It is essential for DNA replication and repair of damaged DNA. This Brucella suis biovar 1 (strain 1330) protein is DNA ligase.